The following is a 456-amino-acid chain: tRNA modification GTPase MnmE (456 aa).

Positions 25, 87, and 126 each coordinate (6S)-5-formyl-5,6,7,8-tetrahydrofolate. One can recognise a TrmE-type G domain in the interval glycine 221–asparagine 377. Asparagine 231 is a binding site for K(+). Residues asparagine 231–serine 236, threonine 250–threonine 256, and aspartate 275–glycine 278 each bind GTP. Serine 235 is a binding site for Mg(2+). Residues threonine 250, leucine 252, and threonine 255 each coordinate K(+). Mg(2+) is bound at residue threonine 256. Lysine 456 contacts (6S)-5-formyl-5,6,7,8-tetrahydrofolate.

The protein belongs to the TRAFAC class TrmE-Era-EngA-EngB-Septin-like GTPase superfamily. TrmE GTPase family. As to quaternary structure, homodimer. Heterotetramer of two MnmE and two MnmG subunits. The cofactor is K(+).

The protein resides in the cytoplasm. Exhibits a very high intrinsic GTPase hydrolysis rate. Involved in the addition of a carboxymethylaminomethyl (cmnm) group at the wobble position (U34) of certain tRNAs, forming tRNA-cmnm(5)s(2)U34. In Synechocystis sp. (strain ATCC 27184 / PCC 6803 / Kazusa), this protein is tRNA modification GTPase MnmE.